The chain runs to 477 residues: Bifunctional enzyme PyrF/PyrE (477 aa).

The OMP decarboxylase stretch occupies residues 1 to 273; that stretch reads MIFFDKLHQN…ITVRDVASCS (273 aa). The Proton donor role is filled by Lys-96. The interval 274–477 is orotate phosphoribosyltransferase; that stretch reads VWLPDVFTVK…DEQFLALTAE (204 aa). 5-phospho-alpha-D-ribose 1-diphosphate is bound by residues Arg-374, Lys-375, Lys-378, His-380, and 400 to 408; that span reads DDILISGKS.

In the N-terminal section; belongs to the OMP decarboxylase family. Type 2 subfamily. It in the C-terminal section; belongs to the purine/pyrimidine phosphoribosyltransferase family. Requires Mg(2+) as cofactor.

It catalyses the reaction orotidine 5'-phosphate + H(+) = UMP + CO2. The catalysed reaction is orotidine 5'-phosphate + diphosphate = orotate + 5-phospho-alpha-D-ribose 1-diphosphate. Its pathway is pyrimidine metabolism; UMP biosynthesis via de novo pathway; UMP from orotate: step 1/2. It participates in pyrimidine metabolism; UMP biosynthesis via de novo pathway; UMP from orotate: step 2/2. Functionally, catalyzes the transfer of a ribosyl phosphate group from 5-phosphoribose 1-diphosphate to orotate, leading to the formation of orotidine monophosphate (OMP). Its function is as follows. Catalyzes the decarboxylation of orotidine monophosphate (OMP) to uridine monophosphate (UMP). In Nostoc sp. (strain PCC 7120 / SAG 25.82 / UTEX 2576), this protein is Bifunctional enzyme PyrF/PyrE (pyrFE).